Here is a 426-residue protein sequence, read N- to C-terminus: 3-phosphoshikimate 1-carboxyvinyltransferase (426 aa).

3 residues coordinate 3-phosphoshikimate: Lys21, Ser22, and Arg26. Residue Lys21 coordinates phosphoenolpyruvate. Gly91 and Arg119 together coordinate phosphoenolpyruvate. Ser162, Ser163, Gln164, Ser190, Asp304, and Lys331 together coordinate 3-phosphoshikimate. Gln164 contacts phosphoenolpyruvate. Asp304 functions as the Proton acceptor in the catalytic mechanism. Phosphoenolpyruvate contacts are provided by Arg335, Arg377, and Lys403.

It belongs to the EPSP synthase family. As to quaternary structure, monomer.

It localises to the cytoplasm. It catalyses the reaction 3-phosphoshikimate + phosphoenolpyruvate = 5-O-(1-carboxyvinyl)-3-phosphoshikimate + phosphate. It functions in the pathway metabolic intermediate biosynthesis; chorismate biosynthesis; chorismate from D-erythrose 4-phosphate and phosphoenolpyruvate: step 6/7. Catalyzes the transfer of the enolpyruvyl moiety of phosphoenolpyruvate (PEP) to the 5-hydroxyl of shikimate-3-phosphate (S3P) to produce enolpyruvyl shikimate-3-phosphate and inorganic phosphate. The chain is 3-phosphoshikimate 1-carboxyvinyltransferase from Clostridium kluyveri (strain ATCC 8527 / DSM 555 / NBRC 12016 / NCIMB 10680 / K1).